Reading from the N-terminus, the 283-residue chain is 32 kDa beta-galactoside-binding lectin (283 aa).

2 Galectin domains span residues 17–148 and 156–283; these read YRSL…VHWG and YESG…IQIQ. Residue 217–223 coordinates a beta-D-galactoside; the sequence is WGNEERE.

As to quaternary structure, (Microbial infection) Interacts (via domain galectin 2) with goat TMEM147. Interacts (via domain galectin 1) with goat TMEM63A.

It is found in the membrane. Its function is as follows. Binds galactose. Exerts immunomodulatory effects on host peripheral blood mononuclear cells to down-regulate host immune response. Hemagglutinates human, dog, rabbit, chicken and mouse erythrocytes but does not hemagglutinate the erythrocytes of goat, its natural host. This Haemonchus contortus (Barber pole worm) protein is 32 kDa beta-galactoside-binding lectin (GAL-1).